The chain runs to 243 residues: MSDWLFDLGNSRFKFAPLQGDRAGDVQAWAHGAEGMAGQPPHSLPSGTTAFVASVAAPSLTSAMLDQLQRRFEHVHVVRTSAECAGVRIAYAKPEKFGVDRFLALLAAAKAQRPVLVVGVGTALTIDLLDADGQHHGGRISASPTTMREALHARAVQLPATGGDYSEFANDTADALASGCDGAAVALIERSAQQAHTLLGVAPSLLVHGGGAPALMPLLPGADYHPSLVLDGLARWAVHQPAG.

7 to 14 (DLGNSRFK) is a binding site for ATP. Substrate is bound by residues Tyr91 and 98 to 101 (GVDR). The active-site Proton acceptor is the Asp100. Residue Thr122 participates in ATP binding. Thr172 provides a ligand contact to substrate.

Belongs to the type III pantothenate kinase family. In terms of assembly, homodimer. Requires NH4(+) as cofactor. The cofactor is K(+).

It localises to the cytoplasm. The enzyme catalyses (R)-pantothenate + ATP = (R)-4'-phosphopantothenate + ADP + H(+). It functions in the pathway cofactor biosynthesis; coenzyme A biosynthesis; CoA from (R)-pantothenate: step 1/5. Catalyzes the phosphorylation of pantothenate (Pan), the first step in CoA biosynthesis. The chain is Type III pantothenate kinase from Stenotrophomonas maltophilia (strain K279a).